The chain runs to 127 residues: Acetylcholine receptor subunit alpha (127 aa).

The Extracellular segment spans residues 1–127 (ADGIFAIDQF…YFIVNVIIPC (127 aa)). Cys33 and Cys47 are joined by a disulfide. Asn46 and Asn94 each carry an N-linked (GlcNAc...) asparagine glycan. A disulfide bond links Cys97 and Cys98.

This sequence belongs to the ligand-gated ion channel (TC 1.A.9) family. Acetylcholine receptor (TC 1.A.9.1) subfamily. Alpha-1/CHRNA1 sub-subfamily. As to quaternary structure, one of the alpha chains that assemble within the acetylcholine receptor, a pentamer of two alpha chains, a beta, a delta, and a gamma or epsilon chains.

The protein resides in the postsynaptic cell membrane. Its subcellular location is the cell membrane. The enzyme catalyses K(+)(in) = K(+)(out). The catalysed reaction is Na(+)(in) = Na(+)(out). Its function is as follows. Upon acetylcholine binding, the AChR responds by an extensive change in conformation that affects all subunits and leads to opening of an ion-conducting channel across the plasma membrane. Does not bind alpha-bungarotoxin. This Natrix tessellata (Dice snake) protein is Acetylcholine receptor subunit alpha (CHRNA1).